The chain runs to 56 residues: UPF0339 protein NMA1193/NMA1859 (56 aa).

This sequence belongs to the UPF0339 family.

This is UPF0339 protein NMA1193/NMA1859 from Neisseria meningitidis serogroup A / serotype 4A (strain DSM 15465 / Z2491).